Consider the following 345-residue polypeptide: Anthranilate phosphoribosyltransferase (345 aa).

5-phospho-alpha-D-ribose 1-diphosphate is bound by residues Gly81, 84-85 (GD), Ser89, 91-94 (NVST), 109-117 (KHGNRAATS), and Ala121. Gly81 lines the anthranilate pocket. A Mg(2+)-binding site is contributed by Ser93. Asn112 lines the anthranilate pocket. An anthranilate-binding site is contributed by Arg167. Mg(2+) contacts are provided by Asp226 and Glu227.

The protein belongs to the anthranilate phosphoribosyltransferase family. Homodimer. It depends on Mg(2+) as a cofactor.

The enzyme catalyses N-(5-phospho-beta-D-ribosyl)anthranilate + diphosphate = 5-phospho-alpha-D-ribose 1-diphosphate + anthranilate. It participates in amino-acid biosynthesis; L-tryptophan biosynthesis; L-tryptophan from chorismate: step 2/5. Its function is as follows. Catalyzes the transfer of the phosphoribosyl group of 5-phosphorylribose-1-pyrophosphate (PRPP) to anthranilate to yield N-(5'-phosphoribosyl)-anthranilate (PRA). This is Anthranilate phosphoribosyltransferase from Methylobacterium radiotolerans (strain ATCC 27329 / DSM 1819 / JCM 2831 / NBRC 15690 / NCIMB 10815 / 0-1).